A 183-amino-acid chain; its full sequence is Ribosome maturation factor RimM (183 aa).

Residues E104–F183 form the PRC barrel domain.

The protein belongs to the RimM family. In terms of assembly, binds ribosomal protein uS19.

It is found in the cytoplasm. Its function is as follows. An accessory protein needed during the final step in the assembly of 30S ribosomal subunit, possibly for assembly of the head region. Essential for efficient processing of 16S rRNA. May be needed both before and after RbfA during the maturation of 16S rRNA. It has affinity for free ribosomal 30S subunits but not for 70S ribosomes. In Cronobacter sakazakii (strain ATCC BAA-894) (Enterobacter sakazakii), this protein is Ribosome maturation factor RimM.